The chain runs to 315 residues: Eukaryotic translation initiation factor 2 subunit 1 (315 aa).

Positions 17–88 (EDVVMVNVRS…EKGYIDLSKR (72 aa)) constitute an S1 motif domain. A Phosphoserine; by HRI modification is found at Ser-49. Ser-52 carries the post-translational modification Phosphoserine. At Lys-141 the chain carries N6-acetyllysine. Position 158 is a phosphoserine (Ser-158). Phosphothreonine occurs at positions 279 and 281. The interval 293-315 (LERENAEVDGDDDAEEMEAKAED) is disordered. Residues 299–308 (EVDGDDDAEE) show a composition bias toward acidic residues.

Belongs to the eIF-2-alpha family. In terms of assembly, eukaryotic translation initiation factor 2 eIF2 is a heterotrimeric complex composed of an alpha (EIF2S1), a beta (EIF2S2) and a gamma (EIF2S3) chain. eIF2 is member of the 43S pre-initiation complex (43S PIC). eIF2 forms a complex with at least CELF1/CUGBP1, CALR, CALR3, EIF2S1, EIF2S2, HSP90B1 and HSPA5. Interaction with METAP2 protects EIF2S1 from inhibitory phosphorylation. Interacts with ABCF1 isoform 2. Associates with ribosomes. Interacts with DDX3X in an RNA-independent manner. Interacts with CDC123. As to quaternary structure, (Microbial infection) Interacts with rotavirus A non-structural protein 2; this interaction probably plays a role in the sequestration of IF2A in viral factories. Interacts with rotavirus A non-structural protein 5; this interaction probably plays a role in its sequestration in viral factories. Post-translationally, phosphorylation at Ser-49 and Ser-52 stabilizes the eIF-2/GDP/eIF2B complex and prevents GDP/GTP exchange reaction, thus impairing the recycling of eIF-2 between successive rounds of initiation and leading to global inhibition of translation, while concomitantly initiating the preferential translation of integrated stress response (ISR)-specific mRNAs. Substrate for at least 4 kinases: EIF2AK1/HRI, EIF2AK2/PKR, EIF2AK3/PERK and EIF2AK4/GCN2. Phosphorylation on Ser-52 by the EIF2AK4/GCN2 protein kinase occurs in response to amino acid starvation and UV irradiation. Phosphorylation at Ser-52 by the EIF2AK3/PERK protein kinase occurs in response to the unfolded protein response. Phosphorylation at Ser-52 by EIF2AK1/HRI in response to mitochondrial damage promotes relocalization to the mitochondrial surface. (Microbial infection) Phosphorylation by vaccinia virus protein E3 and rotavirus A stabilizes the eIF-2/GDP/eIF2B complex and prevents GDP/GTP exchange reaction, thus impairing the recycling of eIF-2 between successive rounds of initiation and leading to global inhibition of translation.

The protein resides in the cytoplasm. The protein localises to the stress granule. It is found in the cytosol. It localises to the mitochondrion. Its activity is regulated as follows. Activity is regulated by phosphorylation at Ser-49 and Ser-52, which stabilizes the eIF2/GDP/eIF2B complex and prevents the eIF2B-mediated exchange of GDP for GTP, thereby preventing the formation of the 43S pre-initiation complex (43S PIC). This results in the global attenuation of 5' cap-dependent protein synthesis and concomitant translation of ISR-specific mRNAs that contain a short upstream open reading frame (uORF) in their 5' UTR, such as ATF4, ATF5, DDIT3/CHOP and PPP1R15A/GADD34. In terms of biological role, member of the eIF2 complex that functions in the early steps of protein synthesis by forming a ternary complex with GTP and initiator tRNA. This complex binds to a 40S ribosomal subunit, followed by mRNA binding to form a 43S pre-initiation complex (43S PIC). Junction of the 60S ribosomal subunit to form the 80S initiation complex is preceded by hydrolysis of the GTP bound to eIF2 and release of an eIF2-GDP binary complex. In order for eIF2 to recycle and catalyze another round of initiation, the GDP bound to eIF2 must exchange with GTP by way of a reaction catalyzed by eIF2B. EIF2S1/eIF2-alpha is a key component of the integrated stress response (ISR), required for adaptation to various stress: phosphorylation by metabolic-stress sensing protein kinases (EIF2AK1/HRI, EIF2AK2/PKR, EIF2AK3/PERK and EIF2AK4/GCN2) in response to stress converts EIF2S1/eIF2-alpha in a global protein synthesis inhibitor, leading to an attenuation of cap-dependent translation, while concomitantly initiating the preferential translation of ISR-specific mRNAs, such as the transcriptional activators ATF4 and QRICH1, and hence allowing ATF4- and QRICH1-mediated reprogramming. EIF2S1/eIF2-alpha also acts as an activator of mitophagy in response to mitochondrial damage: phosphorylation by EIF2AK1/HRI promotes relocalization to the mitochondrial surface, thereby triggering PRKN-independent mitophagy. The chain is Eukaryotic translation initiation factor 2 subunit 1 from Homo sapiens (Human).